Reading from the N-terminus, the 1486-residue chain is Chromosome partition protein MukB (1486 aa).

34-41 (GGNGAGKS) provides a ligand contact to ATP. Coiled coils occupy residues 326–418 (LEAD…QYNQ), 444–480 (LETFQAKELEATEKMLSLEQKMSMAQTAHSQFEQAYQ), and 509–603 (RHLA…RAPV). The tract at residues 666 to 783 (PGGSEDQRLN…EVPLFGRAAR (118 aa)) is flexible hinge. Coiled-coil stretches lie at residues 835–923 (EAEI…AKLE), 977–1115 (EMLS…TAKA), and 1209–1266 (VEAI…QNVS).

Belongs to the SMC family. MukB subfamily. In terms of assembly, homodimerization via its hinge domain. Binds to DNA via its C-terminal region. Interacts, and probably forms a ternary complex, with MukE and MukF via its C-terminal region. The complex formation is stimulated by calcium or magnesium. Interacts with tubulin-related protein FtsZ.

It localises to the cytoplasm. It is found in the nucleoid. In terms of biological role, plays a central role in chromosome condensation, segregation and cell cycle progression. Functions as a homodimer, which is essential for chromosome partition. Involved in negative DNA supercoiling in vivo, and by this means organize and compact chromosomes. May achieve or facilitate chromosome segregation by condensation DNA from both sides of a centrally located replisome during cell division. This chain is Chromosome partition protein MukB, found in Escherichia coli (strain ATCC 8739 / DSM 1576 / NBRC 3972 / NCIMB 8545 / WDCM 00012 / Crooks).